The sequence spans 932 residues: MALKSPAFRRKFPLLVTGGLLALQPLATSYAVAAEQFDCQVSAAGGWDCKPKAPVNNLPPRPVHEGAAVSSGTEAASEGETADRPMLVTEAKGRALKSRSEDYSHLDWVPREKLTAAQLAETGPYCGGAYVEPTRPGMADTTPKDESPTYINAKVSKYQQEQQIATLAGDVVMRQGSMQAEADEANLYQTENRGELKGNVKIRDNGSLVVGDEAQIQLDTGEAQVDNAEYVMHKSHIRGSALYAKRGENAIIRLKDGTYTTCEPGSNAWQLKGNNITLNPATGFGTATNVTLRVKDFPVFYTPYIYFPIDDRRQSGFLPPSFSTSSDTGFMLVTPYYFNLAPNYDATLYPRYMAKRGLLMEGEFRYLTPSSEGQFGGAYLNDKDDDRKEQTDYKDQRWMVNWQHKGGLDERLMTEVDYTDISDPFYFQDLESDQIGVESRDLLNQQGALTYRGDNYTARLNVHAYEMATISQITPYDRLPQITLNGVLPYNPGGLVMGYESEAVRFDRDLKDDFVRDKDGNPDFSAGAAGRRLDQNVSGIARANGNRFNVAPSISLPMEASYGYLTPKLKYAYTHYDLDLDSQGKAQAIAQSANPAYGSYNSSLNRDVPIFSVDSGLYFDRNTSLFGTNYKQTLEPRLFYLNVPYKDQRDIPIFDSSETLFSYDSLFRDNRFSGTDRIGDENKLSLGVTTRWIEDNGFERQNFSIGQAYYFKDRKVQLPGIYYKDRQSAQSDTSPYALVYNYYFNRDWRFNSDFNWDPDSRSTRSGSAMFHYQPEDNPNKVVNLGYRYRNDTIIYDSTTGTWKEGGSYGNPGDPNYIKDYYKIQQHDFSVIWPIVPQWSVIARWQHDYNRNRTLEAMGGFEYDNCCWKLRLINRYWIDYDDFSQALPANEKGDHGVFLQIVLKGLGGVVGNKVESFLDQGIQGYREREDQAY.

An N-terminal signal peptide occupies residues 1-33 (MALKSPAFRRKFPLLVTGGLLALQPLATSYAVA). Residues 54–87 (PVNNLPPRPVHEGAAVSSGTEAASEGETADRPML) form a disordered region.

This sequence belongs to the LptD family. In terms of assembly, component of the lipopolysaccharide transport and assembly complex. Interacts with LptE and LptA.

Its subcellular location is the cell outer membrane. Functionally, together with LptE, is involved in the assembly of lipopolysaccharide (LPS) at the surface of the outer membrane. The polypeptide is LPS-assembly protein LptD (Pseudomonas putida (strain GB-1)).